The following is a 131-amino-acid chain: MSWQTYVDEHLMCDIDGHHLTAAAIIGHDGSVWAQSSSFPQFKPEEVAAIMKDFDEPGSLAPTGLHLGGTKYMVIQGEPGAVIRGKKGSGGITVKKTGQALIIGIYDEPLTPGQCNMIVERLGDYLLEQGM.

The protein belongs to the profilin family. In terms of assembly, occurs in many kinds of cells as a complex with monomeric actin in a 1:1 ratio.

Its subcellular location is the cytoplasm. It is found in the cytoskeleton. In terms of biological role, binds to actin and affects the structure of the cytoskeleton. At high concentrations, profilin prevents the polymerization of actin, whereas it enhances it at low concentrations. By binding to PIP2, it inhibits the formation of IP3 and DG. The chain is Profilin-3 from Hevea brasiliensis (Para rubber tree).